Consider the following 512-residue polypeptide: Ribose import ATP-binding protein RbsA (512 aa).

ABC transporter domains follow at residues 6 to 242 (LELR…VNRE) and 252 to 496 (VPAG…TGAQ). ATP is bound at residue 38–45 (GENGAGKS).

Belongs to the ABC transporter superfamily. Ribose importer (TC 3.A.1.2.1) family. In terms of assembly, the complex is composed of an ATP-binding protein (RbsA), two transmembrane proteins (RbsC) and a solute-binding protein (RbsB).

The protein localises to the cell inner membrane. It carries out the reaction D-ribose(out) + ATP + H2O = D-ribose(in) + ADP + phosphate + H(+). In terms of biological role, part of the ABC transporter complex RbsABC involved in ribose import. Responsible for energy coupling to the transport system. The chain is Ribose import ATP-binding protein RbsA from Pseudomonas putida (strain ATCC 47054 / DSM 6125 / CFBP 8728 / NCIMB 11950 / KT2440).